The chain runs to 29 residues: U20-ctenitoxin-Co1a (29 aa).

Disulfide bonds link cysteine 3-cysteine 16 and cysteine 10-cysteine 21.

As to expression, expressed by the venom gland.

Its subcellular location is the secreted. The polypeptide is U20-ctenitoxin-Co1a (Ctenus ornatus (Brazilian spider)).